A 4303-amino-acid chain; its full sequence is Polycystin-1 (4303 aa).

An N-terminal signal peptide occupies residues 1–23 (MPPAAPARLALALGLGLWLGALA). The region spanning 24–67 (GGPGRGCGPCEPPCLCGPAPGAACRVNCSGRGLRTLGPALRIPA) is the LRRNT domain. Residues 24-3074 (GGPGRGCGPC…VFPEPTADVN (3051 aa)) are Extracellular-facing. Residues Asn50 and Asn89 are each glycosylated (N-linked (GlcNAc...) asparagine). 2 LRR repeats span residues 68–91 (DATALDVSHNLLRALDVGLLANLS) and 92–113 (ALAELDISNNKISTLEEGIFAN). N-linked (GlcNAc...) asparagine glycans are attached at residues Asn116 and Asn121. Residues 125–178 (NPFECDCGLAWLPRWAEEQQVRVVQPEAATCAGPGSLAGQPLLGIPLLDSGCGE) form the LRRCT domain. The region spanning 177–271 (GEEYVACLPD…PTLLQHVFPA (95 aa)) is the WSC domain. N-linked (GlcNAc...) asparagine glycosylation is present at Asn187. The PKD 1 domain maps to 272-359 (SPGATLVGPH…VQVEAAPAAL (88 aa)). Residues 415-531 (GNGHCYRLVV…CSAPHSYVCE (117 aa)) enclose the C-type lectin domain. Intrachain disulfides connect Cys436/Cys530 and Cys508/Cys522. The segment at 616–635 (AGTPENGSEPESRSPDNRTQ) is disordered. N-linked (GlcNAc...) asparagine glycosylation is found at Asn621 and Asn632. An LDL-receptor class A; atypical domain is found at 638–671 (PACMPGGRWCPGANICLPLDASCHPQACANGCTS). 3 disulfides stabilise this stretch: Cys640/Cys653, Cys647/Cys665, and Cys660/Cys669. The 75-residue stretch at 743 to 817 (LSANASSWLP…RHNLSCSFDV (75 aa)) folds into the PKD 2 domain. Asn746, Asn810, Asn841, Asn854, Asn890, Asn921, Asn1004, Asn1010, Asn1034, Asn1072, Asn1113, Asn1178, Asn1194, Asn1240, Asn1269, Asn1336, Asn1348, Asn1382, Asn1450, Asn1455, Asn1474, Asn1518, Asn1541, Asn1554, Asn1563, Asn1647, Asn1661, Asn1733, Asn1791, Asn1834, Asn1867, and Asn1880 each carry an N-linked (GlcNAc...) asparagine glycan. PKD domains are found at residues 855 to 928 (ATAT…RVTA), 935 to 1020 (LRAT…NRMQ), 1023 to 1129 (QVST…LPSV), 1127 to 1215 (PSVA…LRGL), 1213 to 1298 (RGLS…EVLR), 1294 to 1383 (LEVL…VGNV), 1382 to 1469 (NVTL…VLVT), 1468 to 1551 (VTSI…VRGL), 1550 to 1635 (GLVV…IEGL), 1634 to 1721 (GLQV…VGWL), 1719 to 1805 (GWLM…VSGL), 1807 to 1890 (IRAS…IVGL), 1889 to 1974 (GLVL…VSGL), 1977 to 2057 (PNCC…VLEV), and 2060 to 2148 (AVQY…ACRE). Residues Asn1991, Asn2050, Asn2074, Asn2125, Asn2248, Asn2353, Asn2395, Asn2412, Asn2567, Asn2578, Asn2645, Asn2718, Asn2754, Asn2841, Asn2878, Asn2925, Asn2956, and Asn2994 are each glycosylated (N-linked (GlcNAc...) asparagine). In terms of domain architecture, REJ spans 2146 to 2833 (CREPEVDVVL…QLIFLVDSNP (688 aa)). One can recognise a GAIN-B domain in the interval 2862-3063 (PIERLASERA…SLFVPPSHVR (202 aa)). Cys3015 and Cys3043 are joined by a disulfide. The tract at residues 3015–3063 (CQYFSEEDMVWRTEGLLPLEETSPRQAVCLTRHLTAFGASLFVPPSHVR) is GPS. The helical transmembrane segment at 3075–3095 (YIVMLTCAVCLVTYMVMAAIL) threads the bilayer. At 3096 to 3277 (HKLDQLDASR…DRPPRSRFTR (182 aa)) the chain is on the cytoplasmic side. One can recognise a PLAT domain in the interval 3118–3233 (FKYEILVKTG…EANGGLVEKE (116 aa)). Residues 3278-3298 (IQRATCCVLLICLFLGANAVW) traverse the membrane as a helical segment. Residues 3299–3323 (YGAVGDSAYSTGHVSRLSPLSVDTV) are Extracellular-facing. Residues 3324–3344 (AVGLVSSVVVYPVYLAILFLF) traverse the membrane as a helical segment. The Cytoplasmic portion of the chain corresponds to 3345 to 3559 (RMSRSKVAGS…LPAWCASLAH (215 aa)). A helical transmembrane segment spans residues 3560-3580 (GLSLLLVAVAVAVSGWVGASF). Residues 3581 to 3582 (PP) lie on the Extracellular side of the membrane. Residues 3583–3603 (GVSVAWLLSSSASFLASFLGW) traverse the membrane as a helical segment. Residues 3604–3665 (EPLKVLLEAL…LAKEEARKVK (62 aa)) are Cytoplasmic-facing. Residues 3666 to 3686 (RLHGMLRSLLVYMLFLLVTLL) traverse the membrane as a helical segment. Over 3687–3901 (ASYGDASCHG…RLSAGLSLPL (215 aa)) the chain is Extracellular. N-linked (GlcNAc...) asparagine glycans are attached at residues Asn3738, Asn3790, and Asn3845. Residues 3902–3922 (LTSVCLLLFAVHFAVAEARTW) traverse the membrane as a helical segment. Residues 3923–3935 (HREGRWRVLRLGA) lie on the Cytoplasmic side of the membrane. The chain crosses the membrane as a helical span at residues 3936–3956 (WARWLLVALTAATALVRLAQL). At 3957–3984 (GAADRQWTRFVRGRPRRFTSFDQVAQLS) the chain is on the extracellular side. Residues 3985–4005 (SAARGLAASLLFLLLVKAAQQ) traverse the membrane as a helical segment. The Cytoplasmic segment spans residues 4006 to 4027 (LRFVRQWSVFGKTLCRALPELL). Residues 4028 to 4048 (GVTLGLVVLGVAYAQLAILLV) form a helical membrane-spanning segment. The Extracellular portion of the chain corresponds to 4049–4090 (SSCVDSLWSVAQALLVLCPGTGLSTLCPAESWHLSPLLCVGL). The chain crosses the membrane as a helical span at residues 4091-4110 (WALRLWGALRLGAVILRWRY). Residues 4111–4303 (HALRGELYRP…AKNKVHPSST (193 aa)) are Cytoplasmic-facing. Disordered stretches follow at residues 4160-4196 (PLPSRSSRGSKVSPDVPPPSAGSDASHPSTSSSQLDG) and 4243-4303 (LHSL…PSST). Ser4166 bears the Phosphoserine; by PRKX; in vitro mark. The segment covering 4185 to 4195 (SHPSTSSSQLD) has biased composition (polar residues). Positions 4220–4251 (EALLTQFDRLNQATEDVYQLEQQLHSLQGRRS) form a coiled coil. Low complexity predominate over residues 4253 to 4269 (RAPAGSSRGPSPGLRPA). A compositionally biased stretch (basic residues) spans 4292–4303 (LRAKNKVHPSST).

Belongs to the polycystin family. As to quaternary structure, component of the heterotetrameric polycystin channel complex with PKD2; the tetramer contains one PKD1 chain and three PKD2 chains. Interacts with PKD2; the interaction is required for ciliary localization. Interacts with PKD2L1. Interacts with PRKX; involved in differentiation and controlled morphogenesis of the kidney. Interacts (via extracellular domain) with WNT3A, WNT4, WNT5A and WNT9B. Interacts with DVL1 and DVL2. Interacts with NPHP1 (via SH3 domain). Interacts with BBS1, BBS4, BBS5 and TTC8. Interacts with RGS7. Interacts (via the PKD repeats in the N-terminal extracellular region) with EPCIP; the interaction is not dependent on N-glycosylation of either protein. In terms of processing, N-glycosylated. After synthesis, undergoes cleavage between Leu-3048 and Thr-3049 in the GPS region of the GAIN-B domain. Cleavage at the GPS region occurs through a cis-autoproteolytic mechanism involving an ester-intermediate via N-O acyl rearrangement. This process takes place in the early secretory pathway, depends on initial N-glycosylation, and requires the REJ domain. There is evidence that cleavage at GPS region is incomplete. Uncleaved and cleaved products may have different functions in vivo.

It localises to the cell membrane. The protein localises to the cell projection. It is found in the cilium. Its subcellular location is the endoplasmic reticulum. The protein resides in the golgi apparatus. It localises to the vesicle. The protein localises to the secreted. It is found in the extracellular exosome. In terms of biological role, component of a heteromeric calcium-permeable ion channel formed by PKD1 and PKD2 that is activated by interaction between PKD1 and a Wnt family member, such as WNT3A and WNT9B. Both PKD1 and PKD2 are required for channel activity. Involved in renal tubulogenesis. Involved in fluid-flow mechanosensation by the primary cilium in renal epithelium. Acts as a regulator of cilium length, together with PKD2. The dynamic control of cilium length is essential in the regulation of mechanotransductive signaling. The cilium length response creates a negative feedback loop whereby fluid shear-mediated deflection of the primary cilium, which decreases intracellular cAMP, leads to cilium shortening and thus decreases flow-induced signaling. May be an ion-channel regulator. Involved in adhesive protein-protein and protein-carbohydrate interactions. Likely to be involved with polycystin-1-interacting protein 1 in the detection, sequestration and exocytosis of senescent mitochondria. The protein is Polycystin-1 of Homo sapiens (Human).